A 397-amino-acid chain; its full sequence is Bifunctional enzyme IspD/IspF (397 aa).

The tract at residues 1 to 236 is 2-C-methyl-D-erythritol 4-phosphate cytidylyltransferase; it reads MSIAAIILAA…LKGMQIFPDI (236 aa). A 2-C-methyl-D-erythritol 2,4-cyclodiphosphate synthase region spans residues 237-397; it reads RTGNGYDVHS…TVIYPGEIPK (161 aa). Aspartate 243 and histidine 245 together coordinate a divalent metal cation. Residues 243–245 and 269–270 each bind 4-CDP-2-C-methyl-D-erythritol 2-phosphate; these read DVH and HS. Residue histidine 277 coordinates a divalent metal cation. Residues 291-293, 367-370, phenylalanine 374, and arginine 377 each bind 4-CDP-2-C-methyl-D-erythritol 2-phosphate; these read DIG and TTNE.

This sequence in the N-terminal section; belongs to the IspD/TarI cytidylyltransferase family. IspD subfamily. In the C-terminal section; belongs to the IspF family. A divalent metal cation is required as a cofactor.

It catalyses the reaction 2-C-methyl-D-erythritol 4-phosphate + CTP + H(+) = 4-CDP-2-C-methyl-D-erythritol + diphosphate. It carries out the reaction 4-CDP-2-C-methyl-D-erythritol 2-phosphate = 2-C-methyl-D-erythritol 2,4-cyclic diphosphate + CMP. The protein operates within isoprenoid biosynthesis; isopentenyl diphosphate biosynthesis via DXP pathway; isopentenyl diphosphate from 1-deoxy-D-xylulose 5-phosphate: step 2/6. Its pathway is isoprenoid biosynthesis; isopentenyl diphosphate biosynthesis via DXP pathway; isopentenyl diphosphate from 1-deoxy-D-xylulose 5-phosphate: step 4/6. Bifunctional enzyme that catalyzes the formation of 4-diphosphocytidyl-2-C-methyl-D-erythritol from CTP and 2-C-methyl-D-erythritol 4-phosphate (MEP) (IspD), and catalyzes the conversion of 4-diphosphocytidyl-2-C-methyl-D-erythritol 2-phosphate (CDP-ME2P) to 2-C-methyl-D-erythritol 2,4-cyclodiphosphate (ME-CPP) with a corresponding release of cytidine 5-monophosphate (CMP) (IspF). The polypeptide is Bifunctional enzyme IspD/IspF (Bartonella bacilliformis (strain ATCC 35685 / KC583 / Herrer 020/F12,63)).